Here is a 515-residue protein sequence, read N- to C-terminus: RNA-splicing ligase RtcB homolog (515 aa).

Mn(2+) is bound by residues Asp129, Cys132, His237, His269, and His363. Residue 236 to 240 coordinates GMP; the sequence is NHYAE. GMP-binding positions include 363–364, 412–415, Ser419, 438–441, and Lys514; these read HN, GGTM, and HGAG. His438 serves as the catalytic GMP-histidine intermediate.

This sequence belongs to the RtcB family. As to quaternary structure, catalytic component of the tRNA-splicing ligase complex. Requires Mn(2+) as cofactor.

The catalysed reaction is a 3'-end 3'-phospho-ribonucleotide-RNA + a 5'-end dephospho-ribonucleoside-RNA + GTP = a ribonucleotidyl-ribonucleotide-RNA + GMP + diphosphate. It catalyses the reaction a 3'-end 2',3'-cyclophospho-ribonucleotide-RNA + a 5'-end dephospho-ribonucleoside-RNA + GTP + H2O = a ribonucleotidyl-ribonucleotide-RNA + GMP + diphosphate + H(+). In terms of biological role, catalytic subunit of the tRNA-splicing ligase complex that acts by directly joining spliced tRNA halves to mature-sized tRNAs by incorporating the precursor-derived splice junction phosphate into the mature tRNA as a canonical 3',5'-phosphodiester. May act as an RNA ligase with broad substrate specificity, and may function toward other RNAs. The protein is RNA-splicing ligase RtcB homolog of Ostreococcus tauri.